A 28-amino-acid chain; its full sequence is Odorant-binding protein 1 (28 aa).

This sequence belongs to the calycin superfamily. Lipocalin family. As to expression, nasal mucosa.

It localises to the secreted. It is found in the extracellular space. Functionally, this soluble protein may play a specific role in odor discrimination and perception. This chain is Odorant-binding protein 1, found in Hystrix cristata (North African crested porcupine).